The sequence spans 637 residues: Biosynthetic arginine decarboxylase (637 aa).

N6-(pyridoxal phosphate)lysine is present on K101. 286 to 296 contributes to the substrate binding site; that stretch reads FDVGGGLAVDY.

It belongs to the Orn/Lys/Arg decarboxylase class-II family. SpeA subfamily. Mg(2+) serves as cofactor. The cofactor is pyridoxal 5'-phosphate.

It catalyses the reaction L-arginine + H(+) = agmatine + CO2. The protein operates within amine and polyamine biosynthesis; agmatine biosynthesis; agmatine from L-arginine: step 1/1. Catalyzes the biosynthesis of agmatine from arginine. This Shewanella piezotolerans (strain WP3 / JCM 13877) protein is Biosynthetic arginine decarboxylase.